Reading from the N-terminus, the 427-residue chain is Glutamate-1-semialdehyde 2,1-aminomutase (427 aa).

Lys-265 is modified (N6-(pyridoxal phosphate)lysine).

Belongs to the class-III pyridoxal-phosphate-dependent aminotransferase family. HemL subfamily. As to quaternary structure, homodimer. Requires pyridoxal 5'-phosphate as cofactor.

Its subcellular location is the cytoplasm. It carries out the reaction (S)-4-amino-5-oxopentanoate = 5-aminolevulinate. The protein operates within porphyrin-containing compound metabolism; protoporphyrin-IX biosynthesis; 5-aminolevulinate from L-glutamyl-tRNA(Glu): step 2/2. The protein is Glutamate-1-semialdehyde 2,1-aminomutase of Mannheimia succiniciproducens (strain KCTC 0769BP / MBEL55E).